Consider the following 135-residue polypeptide: RxLR effector protein PITG_02860 (135 aa).

The N-terminal stretch at 1-18 (MRLAFLLLAVSHFICGNA) is a signal peptide. The RxLR-dEER signature appears at 48-64 (RKLLRTDERLSEANEER). The segment at 126-135 (LKDPQAFRGP) is NRL1-binding domain.

Belongs to the RxLR effector family. In terms of assembly, interacts with host ubiquitin E3 ligase NRL1.

Its subcellular location is the secreted. It is found in the host cytoplasm. It localises to the host nucleus. The protein localises to the host nucleoplasm. In terms of biological role, effector that promotes P.infestans virulence and suppresses pattern-triggered immunity (PTI). Interacts with the host ubiquitin E3 ligase NRL1 and enhances the association between NRL1 and SWAP70 to promote proteasome-mediated degradation of SWAP70, which results in the suppression of immunity. This is RxLR effector protein PITG_02860 from Phytophthora infestans (strain T30-4) (Potato late blight agent).